Consider the following 413-residue polypeptide: MKPICIIPARSGSKGLPDKNMLFLSGKPMIFHTIDAAIESGMFDKKDIFVSTDSELYREICLERGISVVMRKPELSTDQATSYDMLKDFLSDYEDNQEFVLLQVTSPLRKSWHIKEAMEYYSSHDVDNVVSFSEVEKHPSLFTTLSDEGYAIDMVGADKGYRRQDLQPLYYPNGAIFISNKETYLREKSFFTSRTYAYQMAKEFSLDVDTRDDFIHVIGHLFFDYAIREKENKVFYKEGYSRLFNREASKIILGDSKTISTSLESYHNYSQGGVTLATMLENLPNFLTANVTEAFVSIGVNDLITGYSVEEIFSNFQKLYSLLAENKIKMRLTTIAYTLFRETVNNADIEKINQWLTEFCYQNQIPLLDINRFLSKDGNLNYHLTSDGLHFTQEANDLLQSQYQLFVDEVKTL.

This sequence belongs to the CMP-NeuNAc synthase family. The cofactor is Mg(2+). It depends on Mn(2+) as a cofactor.

The protein resides in the cytoplasm. The catalysed reaction is an N-acylneuraminate + CTP = a CMP-N-acyl-beta-neuraminate + diphosphate. Its function is as follows. Catalyzes the formation of CMP-N-acetylneuraminic acid (CMP-NeuNAc), which is essential for the formation of the capsule. The chain is N-acylneuraminate cytidylyltransferase (neuA) from Streptococcus agalactiae serotype V (strain ATCC BAA-611 / 2603 V/R).